The sequence spans 130 residues: Cuticle protein 14 isoform a (130 aa).

In terms of domain architecture, Chitin-binding type R&amp;R spans 24–90 (IGNYNFGYNE…NVHTNEPGTD (67 aa)).

The chain is Cuticle protein 14 isoform a from Limulus polyphemus (Atlantic horseshoe crab).